The following is a 288-amino-acid chain: ATP synthase gamma chain (288 aa).

Belongs to the ATPase gamma chain family. F-type ATPases have 2 components, CF(1) - the catalytic core - and CF(0) - the membrane proton channel. CF(1) has five subunits: alpha(3), beta(3), gamma(1), delta(1), epsilon(1). CF(0) has three main subunits: a, b and c.

Its subcellular location is the cell membrane. In terms of biological role, produces ATP from ADP in the presence of a proton gradient across the membrane. The gamma chain is believed to be important in regulating ATPase activity and the flow of protons through the CF(0) complex. In Staphylococcus haemolyticus (strain JCSC1435), this protein is ATP synthase gamma chain.